A 480-amino-acid polypeptide reads, in one-letter code: Glutamate--tRNA ligase (480 aa).

Positions 9–19 (PSPTGNLHIGT) match the 'HIGH' region motif. A 'KMSKS' region motif is present at residues 247 to 251 (KLSKR). Residue Lys-250 participates in ATP binding.

The protein belongs to the class-I aminoacyl-tRNA synthetase family. Glutamate--tRNA ligase type 1 subfamily. In terms of assembly, monomer.

It is found in the cytoplasm. It catalyses the reaction tRNA(Glu) + L-glutamate + ATP = L-glutamyl-tRNA(Glu) + AMP + diphosphate. Functionally, catalyzes the attachment of glutamate to tRNA(Glu) in a two-step reaction: glutamate is first activated by ATP to form Glu-AMP and then transferred to the acceptor end of tRNA(Glu). This is Glutamate--tRNA ligase from Nostoc sp. (strain PCC 7120 / SAG 25.82 / UTEX 2576).